The following is a 716-amino-acid chain: Radial spoke head protein 4 homolog A (716 aa).

Disordered regions lie at residues M1–R164, E375–F410, G506–N526, and L697–D716. A compositionally biased stretch (basic and acidic residues) spans K8–E25. Composition is skewed to low complexity over residues A29 to P42, Q54 to R66, and S80 to A100. The span at H140 to P156 shows a compositional bias: polar residues. A compositionally biased stretch (acidic residues) spans E375–E389. S396 is modified (phosphoserine). 2 stretches are compositionally biased toward acidic residues: residues G506–A516 and E701–D716.

It belongs to the flagellar radial spoke RSP4/6 family. As to quaternary structure, interacts with RSPH6A. In terms of tissue distribution, expressed in trachea, lungs, and testes. Very strong expression is detected in nasal brushings.

The protein localises to the cytoplasm. It localises to the cytoskeleton. Its subcellular location is the cilium axoneme. It is found in the cell projection. The protein resides in the cilium. In terms of biological role, component of the axonemal radial spoke head which plays an important role in ciliary motility. Essential for triplet radial spokes (RS1, RS2 and RS3) head assembly in the motile cilia. The chain is Radial spoke head protein 4 homolog A (RSPH4A) from Homo sapiens (Human).